A 96-amino-acid chain; its full sequence is Large ribosomal subunit protein uL23 (96 aa).

This sequence belongs to the universal ribosomal protein uL23 family. In terms of assembly, part of the 50S ribosomal subunit. Contacts protein L29, and trigger factor when it is bound to the ribosome.

One of the early assembly proteins it binds 23S rRNA. One of the proteins that surrounds the polypeptide exit tunnel on the outside of the ribosome. Forms the main docking site for trigger factor binding to the ribosome. The polypeptide is Large ribosomal subunit protein uL23 (Onion yellows phytoplasma (strain OY-M)).